An 82-amino-acid chain; its full sequence is Small ribosomal subunit protein bS16 (82 aa).

The protein belongs to the bacterial ribosomal protein bS16 family.

The polypeptide is Small ribosomal subunit protein bS16 (Microcystis aeruginosa (strain NIES-843 / IAM M-2473)).